Reading from the N-terminus, the 428-residue chain is Probable pectin lyase F (428 aa).

The N-terminal stretch at 1–20 is a signal peptide; the sequence is MVLLHPLLTAAALLGASARA. Cys-83 and Cys-107 are oxidised to a cystine. Residue Arg-257 is part of the active site. An N-linked (GlcNAc...) asparagine glycan is attached at Asn-276. Cys-324 and Cys-332 are disulfide-bonded. The segment at 383 to 428 is disordered; the sequence is GSGGSGAASSSVSITPSPTSSAIPSSSATPSSSAYARRHYARHHHY. A compositionally biased stretch (low complexity) spans 389-417; the sequence is AASSSVSITPSPTSSAIPSSSATPSSSAY. Residues 418–428 show a composition bias toward basic residues; that stretch reads ARRHYARHHHY.

Belongs to the polysaccharide lyase 1 family.

Its subcellular location is the secreted. The enzyme catalyses Eliminative cleavage of (1-&gt;4)-alpha-D-galacturonan methyl ester to give oligosaccharides with 4-deoxy-6-O-methyl-alpha-D-galact-4-enuronosyl groups at their non-reducing ends.. In terms of biological role, pectinolytic enzymes consist of four classes of enzymes: pectin lyase, polygalacturonase, pectin methylesterase and rhamnogalacturonase. Among pectinolytic enzymes, pectin lyase is the most important in depolymerization of pectin, since it cleaves internal glycosidic bonds of highly methylated pectins. The sequence is that of Probable pectin lyase F (pelF) from Aspergillus oryzae (strain ATCC 42149 / RIB 40) (Yellow koji mold).